The sequence spans 481 residues: Cis-aconitate decarboxylase (481 aa).

Residues 462-481 form a disordered region; the sequence is SPPEVASNSPACNNSITNLS. Residues 467 to 481 are compositionally biased toward polar residues; the sequence is ASNSPACNNSITNLS.

The protein belongs to the PrpD family. As to quaternary structure, homodimer. As to expression, expressed in LPS-tolerized macrophages (at protein level). Expressed in peripheral blood mononuclear cells (PBMCs), microglia and macrophage cells.

It localises to the mitochondrion. It carries out the reaction cis-aconitate + H(+) = itaconate + CO2. Its function is as follows. Cis-aconitate decarboxylase that catalyzes production of itaconate and is involved in the inhibition of the inflammatory response. Acts as a negative regulator of the Toll-like receptors (TLRs)-mediated inflammatory innate response by stimulating the tumor necrosis factor alpha-induced protein TNFAIP3 expression via reactive oxygen species (ROS) in LPS-tolerized macrophages. Involved in antimicrobial response of innate immune cells; ACOD1-mediated itaconic acid production contributes to the antimicrobial activity of macrophages by generating itaconate, leading to alkylation of proteins, such as TFEB. Involved in antiviral response following infection by flavivirus in neurons: ACOD1-mediated itaconate production inhibits the activity of succinate dehydrogenase, generating a metabolic state in neurons that suppresses replication of viral genomes. Plays a role in the embryo implantation. In Homo sapiens (Human), this protein is Cis-aconitate decarboxylase.